A 425-amino-acid chain; its full sequence is Ribosome biogenesis protein WDR12 homolog (425 aa).

Residues 13–94 are ubiquitin-like (UBL) domain; sequence LQLHLITKQK…EDTVELEYVE (82 aa). 7 WD repeats span residues 106–143, 145–187, 194–233, 258–296, 298–337, 343–383, and 387–425; these read LHDDWVSAVEARDNWILTGCYDNTLNLWTTKGKHKLTI, GHIA…NSVE, GHERGVDCIAANGSKTKMATGSWDTMLKIWSTDVRSGGGD, GHRECISGVQWIDDNTLVTSSWDHTIKIWDLALNGIKSE, SGNKSFFDLSYSKLNGLIITASPDKNLRLYDPKSNQGTLV, GHTQ…APIF, and GHEDKVLACDWSNPRFILSGGSDNSVRVFKSKIAIGGEK. Residues 227-247 are disordered; it reads VRSGGGDSEPSTSKRQKLDQG.

This sequence belongs to the WD repeat WDR12/YTM1 family.

Its subcellular location is the nucleus. It is found in the nucleolus. The protein localises to the nucleoplasm. In terms of biological role, required for maturation of ribosomal RNAs and formation of the large ribosomal subunit. The polypeptide is Ribosome biogenesis protein WDR12 homolog (Culex quinquefasciatus (Southern house mosquito)).